Here is a 452-residue protein sequence, read N- to C-terminus: uncharacterized protein (452 aa).

It belongs to the HypE family.

This is an uncharacterized protein from Methanocaldococcus jannaschii (strain ATCC 43067 / DSM 2661 / JAL-1 / JCM 10045 / NBRC 100440) (Methanococcus jannaschii).